Reading from the N-terminus, the 566-residue chain is Heat shock protein 70 homolog C57A7.12 (566 aa).

Position 39–46 (39–46 (AFNRDGKT)) interacts with ATP. A phosphoserine mark is found at serine 86 and serine 500.

It belongs to the heat shock protein 70 family.

This is Heat shock protein 70 homolog C57A7.12 from Schizosaccharomyces pombe (strain 972 / ATCC 24843) (Fission yeast).